Reading from the N-terminus, the 368-residue chain is Mitogen-activated protein kinase KSS1 (368 aa).

The 301-residue stretch at 13-313 folds into the Protein kinase domain; it reads YKLVDLIGEG…AAEALRHPYL (301 aa). Residues 19-27 and K42 contribute to the ATP site; that span reads IGEGAYGTV. The active-site Proton acceptor is the D143. T183 carries the post-translational modification Phosphothreonine. The TXY motif lies at 183–185; sequence TEY. Residue Y185 is modified to Phosphotyrosine.

The protein belongs to the protein kinase superfamily. Ser/Thr protein kinase family. MAP kinase subfamily. HOG1 sub-subfamily. As to quaternary structure, in the nucleus, KSS1 forms a complex with DIG1, DIG2 and STE12; in contrast to FUS3 the interaction of KSS1 with STE12 does not depend on DIG1 and DIG2. Phosphorylated KSS1 shows reduced interaction with STE12. During pheromone activation and phosphorylation, KSS1 forms a membrane-associated complex with the scaffold protein STE5, the MAPKK STE7, the MAPKKK STE11, and the G-protein beta subunit GBB/STE4; interacting directly with POF1, STE7 and STE5 proteins. The cofactor is Mg(2+). Post-translationally, dually phosphorylated on Thr-183 and Tyr-185 by STE7 in response to pheromone or carbon/nitrogen limitation, which activates the enzyme. Activated FUS3 down-regulates KSS1 phosphorylation.

It localises to the nucleus. It is found in the cytoplasm. The protein resides in the periplasm. It carries out the reaction L-seryl-[protein] + ATP = O-phospho-L-seryl-[protein] + ADP + H(+). The catalysed reaction is L-threonyl-[protein] + ATP = O-phospho-L-threonyl-[protein] + ADP + H(+). With respect to regulation, activated by tyrosine and threonine phosphorylation after pheromone treatment or carbon/nitrogen limitation. Its function is as follows. Together with closely related FUS3, KSS1 is the final kinase in the signal transduction cascade regulating activation/repression of the mating and filamentation pathways, induced by pheromone and nitrogen/carbon limitation, respectively. Phosphorylated KSS1 activates both pathways, whereas activated FUS3 activates the mating but suppresses the filamentation pathway. KSS1 activity is down-regulated by FUS3 during pheromone induction to prevent inappropriate activation of the filamentation pathway. During induction of filamentation, KSS1 activates the transcription factor STE12 resulting in its binding to and activation of filamentation specific genes. Non-activated KSS1 has a kinase-independent repressive effect on STE12 transcriptional activity, that is mediated by direct binding to STE12 and depends on the presence of DIG1 and DIG2, and that is required for the suppression of filamentation under normal growth conditions. SSN3/SRB10 contributes further to the suppression of filamentation under these conditions by reducing STE12 stability independent of KSS1. FUS3 can partially compensate for the lack of KSS1 but filamentation becomes constitutively induced at a low level in the absence of any signal. KSS1 phosphorylates STE7, STE5, FAR1, DIG1, DIG2, STE12, and SST2. The protein is Mitogen-activated protein kinase KSS1 (KSS1) of Saccharomyces cerevisiae (strain ATCC 204508 / S288c) (Baker's yeast).